A 268-amino-acid polypeptide reads, in one-letter code: Tropinone reductase homolog At2g29150 (268 aa).

22-46 contributes to the NADP(+) binding site; it reads LVTGGSKGLGEAVVEELAMLGARVH. S155 serves as a coordination point for substrate. Y167 functions as the Proton acceptor in the catalytic mechanism.

This sequence belongs to the short-chain dehydrogenases/reductases (SDR) family. SDR65C subfamily.

Enantiospecific reductase active on cyclic monoterpenes and small flexible lipophilic carbonyls. No activity with tropinone, nitrogen-containing tropinone analogs, tropine or pseudotropine as substrate. This is Tropinone reductase homolog At2g29150 from Arabidopsis thaliana (Mouse-ear cress).